The chain runs to 187 residues: Elongation factor P (187 aa).

This sequence belongs to the elongation factor P family.

Its subcellular location is the cytoplasm. It participates in protein biosynthesis; polypeptide chain elongation. Functionally, involved in peptide bond synthesis. Stimulates efficient translation and peptide-bond synthesis on native or reconstituted 70S ribosomes in vitro. Probably functions indirectly by altering the affinity of the ribosome for aminoacyl-tRNA, thus increasing their reactivity as acceptors for peptidyl transferase. The sequence is that of Elongation factor P from Mycolicibacterium vanbaalenii (strain DSM 7251 / JCM 13017 / BCRC 16820 / KCTC 9966 / NRRL B-24157 / PYR-1) (Mycobacterium vanbaalenii).